We begin with the raw amino-acid sequence, 253 residues long: uncharacterized protein (253 aa).

Residues tryptophan 62–tyrosine 78 traverse the membrane as a helical segment. Positions threonine 141 to glutamate 158 are enriched in low complexity. The disordered stretch occupies residues threonine 141–histidine 225. Positions asparagine 200–histidine 216 are enriched in acidic residues.

It localises to the host membrane. This is an uncharacterized protein from Aedes vexans (Inland floodwater mosquito).